The chain runs to 121 residues: Large ribosomal subunit protein uL14 (121 aa).

The protein belongs to the universal ribosomal protein uL14 family. Part of the 50S ribosomal subunit. Forms a cluster with proteins L3 and L19. In the 70S ribosome, L14 and L19 interact and together make contacts with the 16S rRNA in bridges B5 and B8.

In terms of biological role, binds to 23S rRNA. Forms part of two intersubunit bridges in the 70S ribosome. The protein is Large ribosomal subunit protein uL14 of Prochlorococcus marinus (strain MIT 9211).